A 168-amino-acid chain; its full sequence is Endoribonuclease YbeY (168 aa).

Zn(2+) contacts are provided by H127, H131, and H137.

It belongs to the endoribonuclease YbeY family. Zn(2+) serves as cofactor.

The protein localises to the cytoplasm. Its function is as follows. Single strand-specific metallo-endoribonuclease involved in late-stage 70S ribosome quality control and in maturation of the 3' terminus of the 16S rRNA. This Chromobacterium violaceum (strain ATCC 12472 / DSM 30191 / JCM 1249 / CCUG 213 / NBRC 12614 / NCIMB 9131 / NCTC 9757 / MK) protein is Endoribonuclease YbeY.